A 180-amino-acid chain; its full sequence is NADH-quinone oxidoreductase subunit I (180 aa).

2 consecutive 4Fe-4S ferredoxin-type domains span residues 50-80 (LTRDPDGEERCVACNLCAVACPVGCISLQKA) and 90-119 (EFFRINFSRCIFCGMCEEACPTTAIQLTPD). Residues Cys-60, Cys-63, Cys-66, Cys-70, Cys-99, Cys-102, Cys-105, and Cys-109 each contribute to the [4Fe-4S] cluster site.

The protein belongs to the complex I 23 kDa subunit family. NDH-1 is composed of 14 different subunits. Subunits NuoA, H, J, K, L, M, N constitute the membrane sector of the complex. [4Fe-4S] cluster serves as cofactor.

Its subcellular location is the cell inner membrane. It carries out the reaction a quinone + NADH + 5 H(+)(in) = a quinol + NAD(+) + 4 H(+)(out). Functionally, NDH-1 shuttles electrons from NADH, via FMN and iron-sulfur (Fe-S) centers, to quinones in the respiratory chain. The immediate electron acceptor for the enzyme in this species is believed to be ubiquinone. Couples the redox reaction to proton translocation (for every two electrons transferred, four hydrogen ions are translocated across the cytoplasmic membrane), and thus conserves the redox energy in a proton gradient. This chain is NADH-quinone oxidoreductase subunit I, found in Acinetobacter baumannii (strain ACICU).